Here is a 261-residue protein sequence, read N- to C-terminus: Prostate-specific antigen (261 aa).

An N-terminal signal peptide occupies residues M1 to A17. Residues A18 to R24 constitute a propeptide, activation peptide. One can recognise a Peptidase S1 domain in the interval I25 to V258. Disulfide bonds link C31–C173, C50–C66, C152–C219, C184–C198, and C209–C234. Catalysis depends on H65, which acts as the Charge relay system. N69 is a glycosylation site (N-linked (GlcNAc...) asparagine). D120 (charge relay system) is an active-site residue. S213 (charge relay system) is an active-site residue.

Belongs to the peptidase S1 family. Kallikrein subfamily. In terms of assembly, forms a heterodimer with SERPINA5.

It localises to the secreted. The catalysed reaction is Preferential cleavage: -Tyr-|-Xaa-.. Inhibited by SERPINA5. Activity is strongly inhibited by Zn2+, 100 times more abundant in semen than in serum. This inhibition is relieved by exposure to semenogelins, which are avid zinc binders. Its function is as follows. Hydrolyzes semenogelin-1 thus leading to the liquefaction of the seminal coagulum. The protein is Prostate-specific antigen (KLK3) of Homo sapiens (Human).